A 501-amino-acid polypeptide reads, in one-letter code: Nucleic-acid-binding protein from transposon X-element (501 aa).

2 disordered regions span residues 20–71 and 105–128; these read SSPQ…GNSN and AAAK…SKPP. The CCHC-type zinc finger occupies 285–302; the sequence is VQCHRCQQIGHTAKYCRK. Disordered regions lie at residues 353-385 and 400-443; these read RPRS…SRGG and QPMS…TDAS. Low complexity predominate over residues 407–422; sequence QQQKQKQQPYDGSPSR. A compositionally biased stretch (polar residues) spans 434–443; the sequence is GTLQRSTDAS.

The protein localises to the virion. Its function is as follows. Strongly basic protein that binds directly to retroviral RNA and may be involved in its packaging and in the reverse transcription process. The sequence is that of Nucleic-acid-binding protein from transposon X-element from Drosophila melanogaster (Fruit fly).